A 466-amino-acid chain; its full sequence is Cysteine--tRNA ligase (466 aa).

Residue Cys-27 participates in Zn(2+) binding. Positions 29 to 39 (PTVYDDAHLGH) match the 'HIGH' region motif. The Zn(2+) site is built by Cys-208, His-238, and Glu-242. The 'KMSKS' region signature appears at 270–274 (KMSKS). Position 273 (Lys-273) interacts with ATP.

This sequence belongs to the class-I aminoacyl-tRNA synthetase family. Monomer. Zn(2+) serves as cofactor.

It localises to the cytoplasm. It carries out the reaction tRNA(Cys) + L-cysteine + ATP = L-cysteinyl-tRNA(Cys) + AMP + diphosphate. The polypeptide is Cysteine--tRNA ligase (Sulfurimonas denitrificans (strain ATCC 33889 / DSM 1251) (Thiomicrospira denitrificans (strain ATCC 33889 / DSM 1251))).